A 74-amino-acid chain; its full sequence is Conotoxin AbVIH (74 aa).

The first 17 residues, 1–17 (VLIIAVLFLTACQLTTA), serve as a signal peptide directing secretion. Residues 18–40 (ETSSRGKQKHRALRSTDKDSRMT) constitute a propeptide that is removed on maturation. Residues 19–40 (TSSRGKQKHRALRSTDKDSRMT) are disordered. 3 cysteine pairs are disulfide-bonded: Cys-43–Cys-57, Cys-50–Cys-61, and Cys-56–Cys-68.

The protein belongs to the conotoxin O1 superfamily. In terms of tissue distribution, expressed by the venom duct.

The protein localises to the secreted. The sequence is that of Conotoxin AbVIH from Conus abbreviatus (Abbreviated cone).